We begin with the raw amino-acid sequence, 295 residues long: Putative NADH-ubiquinone oxidoreductase MJ0520 (295 aa).

A run of 8 helical transmembrane segments spans residues 8–28 (LIGA…LLGL), 69–89 (LYIF…IIAI), 129–149 (VFSA…YLTT), 163–183 (IHGS…ILLV), 199–219 (IVSG…YIAE), 220–240 (AIAY…PLVI), 243–263 (PVLT…VNGL), and 273–293 (VMLQ…RLIV).

This sequence belongs to the complex I subunit 1 family.

The protein localises to the cell membrane. It carries out the reaction a ubiquinone + NADH + 5 H(+)(in) = a ubiquinol + NAD(+) + 4 H(+)(out). This Methanocaldococcus jannaschii (strain ATCC 43067 / DSM 2661 / JAL-1 / JCM 10045 / NBRC 100440) (Methanococcus jannaschii) protein is Putative NADH-ubiquinone oxidoreductase MJ0520.